A 225-amino-acid chain; its full sequence is E3 ubiquitin-protein ligase ATL76 (225 aa).

Residues 59-79 (LMLLSVLICGIICCLGLHYII) form a helical membrane-spanning segment. An RING-type; atypical zinc finger spans residues 135-177 (CVICLSDFVSGEQLRLLPKCNHGFHVRCIDKWLQHHLTCPKCR).

It belongs to the RING-type zinc finger family. ATL subfamily.

It is found in the membrane. The catalysed reaction is S-ubiquitinyl-[E2 ubiquitin-conjugating enzyme]-L-cysteine + [acceptor protein]-L-lysine = [E2 ubiquitin-conjugating enzyme]-L-cysteine + N(6)-ubiquitinyl-[acceptor protein]-L-lysine.. It functions in the pathway protein modification; protein ubiquitination. Its function is as follows. E3 ubiquitin-protein ligase able to catalyze polyubiquitination with ubiquitin-conjugating enzyme E2 UBC8 in vitro. This chain is E3 ubiquitin-protein ligase ATL76 (ATL76), found in Arabidopsis thaliana (Mouse-ear cress).